The following is a 917-amino-acid chain: MNVDERSRIGGREKDAGPGKGILKQNQSSQMTSSFLENPGVRIPTRIITKKEVLDGSNTTSRINTSNLQSMVKRRVSFAPDVTLHSFTFVPEQNNEIKEPRRRKTSTNSPTKISSQEEPLVTSTQIDDARTEEKTAAEEDPDTSGMELTEPIVATPDSNKASQHDPTSMEMTEVFPRSIRQKNPDVEGESIESSQQIDDVEAVREETMELTAIHNVHDYDSISKDTVEGEPIDLTEYESKPYVPNSVSRSTGKSSDYSVERSNDKSDLSKSENKTNSSQPMEITDIFHADPQNPMSLHSDNNINNDGNEMELTQIQTNFDRDNHHIDESPSEKHAFSSNKRRKLDTVSDYAASVTTPVKEAKDTSGEDNDGDLEMMEKMSPITFSDVDNKIGTRSNDVFTIEPGTEDTGMQTATDDEEDGENVDDNGNKIVEKTRLPEIDKEGQSGIALPTQDYTLREFINEVGVGFLDTKLIDDLDKKVNFPLNSFNFVENQRIDNVFSAFYIDIPILEVEAFRCKELWRSINESKDKFKDFEAQIDKSHPPLLLQEYFSSDEKMKQLMRDQLQLVKGYSKLEAAMEWYEWRKKQLNGLELILAENLNTLKREYEKLNEEVEKVNSIRGKIRKLNEAIKEEIRSLKNLPSDSYKPTLMNRIKIEAFKQELMEHSISLSSSNDFTQEMRSLKLAIAKKSNDILTLRSEVASIDKKIEKRKLFTRFDLPKLRDTLKILESLTGVRFLKFSKATLSIAFLQLDDLRVDINLANFKNNPLSSMKVMNDSNNDDMSYHLFTMLLKNVEAEHQDSMLSNLFFAMKKWRPLLKYIKLLKLLFPVKITQTEEEEALLQFKDYDRRNKTAFFYVISLVSFAQGVFSENGQIPMKVHISTQQDYSPSREVLSDRITHKISGVLPSFTKSRIHLEFT.

The segment covering 1-17 (MNVDERSRIGGREKDAG) has biased composition (basic and acidic residues). The disordered stretch occupies residues 1–38 (MNVDERSRIGGREKDAGPGKGILKQNQSSQMTSSFLEN). Over residues 24–36 (KQNQSSQMTSSFL) the composition is skewed to polar residues. Serine 77 carries the post-translational modification Phosphoserine. 3 disordered regions span residues 93–172 (QNNE…MEMT), 235–282 (TEYE…QPME), and 324–343 (HHIDESPSEKHAFSSNKRRK). Polar residues predominate over residues 106–126 (STNSPTKISSQEEPLVTSTQI). Residues 127-137 (DDARTEEKTAA) show a composition bias toward basic and acidic residues. Residues 146 to 149 (MELT) carry the MELT motif. Phosphothreonine; by MPS1 is present on threonine 149. Residues 156–170 (PDSNKASQHDPTSME) show a composition bias toward polar residues. Positions 165–183 (DPTSMEMTEVFPRSIRQKN) are interacts with the BUB1-BUB3 complex. 2 short sequence motifs (MELT; degenerate) span residues 169 to 172 (MEMT) and 232 to 235 (IDLT). Residues threonine 172 and threonine 235 each carry the phosphothreonine; by MPS1 modification. Over residues 245 to 257 (NSVSRSTGKSSDY) the composition is skewed to polar residues. Composition is skewed to basic and acidic residues over residues 258 to 273 (SVERSNDKSDLSKSEN) and 324 to 335 (HHIDESPSEKHA). A Phosphothreonine modification is found at threonine 356. Position 380 is a phosphoserine (serine 380). Residues 397–427 (DVFTIEPGTEDTGMQTATDDEEDGENVDDNG) are disordered. A compositionally biased stretch (acidic residues) spans 414–424 (TDDEEDGENVD). A required for interaction with KRE28 region spans residues 507-638 (PILEVEAFRC…IKEEIRSLKN (132 aa)). The stretch at 591 to 628 (ELILAENLNTLKREYEKLNEEVEKVNSIRGKIRKLNEA) forms a coiled coil.

As to quaternary structure, component of the KNL1/SPC105 complex composed of SPC105 and KRE28. Part of the outer kinetochore KMN network that includes the KNL1, MIS12 and NDC80 complexes. Interacts (via phosphorylated MELT motifs) with BUB1 and BUB3 in the BUB1-BUB3 complex; the interaction is direct. Interacts with the MIS12 complex subunits MTW1 (via C-terminus) and NSL1 (via C-terminus). Interacts with the NDC80 complex subunits SPC24 and SPC25. Interacts with CNN1 (via N-terminus).

The protein localises to the nucleus. It localises to the chromosome. Its subcellular location is the centromere. The protein resides in the kinetochore. In terms of biological role, acts as a component of the outer kinetochore KNL1 complex that serves as a docking point for spindle assembly checkpoint components and mediates microtubule-kinetochore interactions. Kinetochores, consisting of a centromere-associated inner segment and a microtubule-contacting outer segment, play a crucial role in chromosome segregation by mediating the physical connection between centromeric DNA and spindle microtubules. The outer kinetochore is made up of the ten-subunit KMN network, comprising the MIS12, NDC80 and KNL1 complexes, and auxiliary microtubule-associated components; together they connect the outer kinetochore with the inner kinetochore, bind microtubules, and mediate interactions with mitotic checkpoint proteins that delay anaphase until chromosomes are bioriented on the spindle. Recruits the BUB1-BUB3 complex to kinetochores when phosphorylated by MPS1, to support spindle assembly checkpoint signaling; the effect is reversed by protein phosphatase 1 (PP1). The KNL1 complex is required for kinetochore binding by the kMAPs (kinetochore-bound microtubule-associated proteins) BIM1, BIK1 and SLK19, and motors CIN8 and KAR3. In Saccharomyces cerevisiae (strain ATCC 204508 / S288c) (Baker's yeast), this protein is Outer kinetochore KNL1 complex subunit SPC105 (SPC105).